The sequence spans 182 residues: Aralkylamine dehydrogenase light chain (182 aa).

A signal peptide (tat-type signal) is located at residues 1–47 (MRWLDKFGESLSRSVAHKTSRRSVLRSVGKLMVGSAFVLPVLPVARA). 7 disulfide bridges follow: Cys-75/Cys-140, Cys-81/Cys-113, Cys-88/Cys-171, Cys-90/Cys-138, Cys-91/Cys-135, Cys-98/Cys-129, and Cys-130/Cys-161. Residue Asp-84 coordinates substrate. The active-site Tryptophylquinone 6'-substrate hemiaminal intermediate is Trp-109. Trp-109 is modified (tryptophylquinone). The segment at residues 109 to 160 (WIGTCHNPHDGKDYLISYHDCCGKTACGRCQCNTQTRERPGYEFFLHNDVNW) is a cross-link (tryptophan tryptophylquinone (Trp-Trp)). Catalysis depends on Asp-128, which acts as the Proton acceptor. Residue 156–158 (NDV) coordinates substrate.

The protein belongs to the aromatic amine dehydrogenase light chain family. As to quaternary structure, heterotetramer of two light and two heavy chains. Binds two azurin molecules per heterotetramer. Tryptophan tryptophylquinone residue serves as cofactor. In terms of processing, tryptophan tryptophylquinone (TTQ) is formed by oxidation of the indole ring of a tryptophan to form tryptophylquinone followed by covalent cross-linking with another tryptophan residue. Post-translationally, predicted to be exported by the Tat system. The position of the signal peptide cleavage has been experimentally proven.

The protein resides in the periplasm. It catalyses the reaction an aralkylamine + 2 oxidized [azurin] + H2O = an aromatic aldehyde + 2 reduced [azurin] + NH4(+) + 2 H(+). With respect to regulation, irreversibly inhibited by phenylhydrazine, hydroxylamine, semicarbazide, hydrazine and aminoguanidine. Reversibly inhibited by isonicotinic acid hydrazide (isoniazid) and isonicotinic acid 2-isopropyl hydrazide (iproniazid). In terms of biological role, oxidizes primary aromatic amines and, more slowly, some long-chain aliphatic amines, but not methylamine or ethylamine. Uses azurin as an electron acceptor to transfer electrons from the reduced tryptophylquinone cofactor. This Alcaligenes faecalis protein is Aralkylamine dehydrogenase light chain.